Reading from the N-terminus, the 2690-residue chain is Probable polyketide synthase 28 (2690 aa).

The 429-residue stretch at Tyr-15–Glu-443 folds into the Ketosynthase family 3 (KS3) domain. Active-site for beta-ketoacyl synthase activity residues include Cys-187, His-326, and His-366. Residues Gly-651 to Tyr-684 form an acyl/malonyl transferases region. Catalysis depends on Ser-661, which acts as the For acyl/malonyl transferase activity. The stretch at Asn-906–Asn-934 forms a coiled coil. Positions Asn-916–Asn-946 are disordered. Residues His-973–Ser-1102 form an N-terminal hotdog fold region. The region spanning His-973–Ser-1285 is the PKS/mFAS DH domain. The Proton acceptor; for dehydratase activity role is filled by His-1014. The tract at residues Asn-1119–Ser-1285 is C-terminal hotdog fold. Residue Asp-1188 is the Proton donor; for dehydratase activity of the active site. Residues Leu-1401 to Glu-1429 are disordered. Over residues Lys-1412 to Glu-1429 the composition is skewed to low complexity. Residues Ser-2594–Tyr-2671 form the Carrier domain. An O-(pantetheine 4'-phosphoryl)serine modification is found at Ser-2631.

Pantetheine 4'-phosphate is required as a cofactor.

Functionally, probable polyketide synthase. In Dictyostelium discoideum (Social amoeba), this protein is Probable polyketide synthase 28 (pks28).